The sequence spans 154 residues: Myoglobin (154 aa).

The 147-residue stretch at 2-148 (GLSDGEWQLV…FRKDMASNYK (147 aa)) folds into the Globin domain. A Phosphoserine modification is found at serine 4. Histidine 65 is a binding site for nitrite. Position 65 (histidine 65) interacts with O2. Threonine 68 bears the Phosphothreonine mark. Histidine 94 provides a ligand contact to heme b.

This sequence belongs to the globin family. As to quaternary structure, monomeric.

The protein resides in the cytoplasm. It localises to the sarcoplasm. It catalyses the reaction Fe(III)-heme b-[protein] + nitric oxide + H2O = Fe(II)-heme b-[protein] + nitrite + 2 H(+). It carries out the reaction H2O2 + AH2 = A + 2 H2O. Its function is as follows. Monomeric heme protein which primary function is to store oxygen and facilitate its diffusion within muscle tissues. Reversibly binds oxygen through a pentacoordinated heme iron and enables its timely and efficient release as needed during periods of heightened demand. Depending on the oxidative conditions of tissues and cells, and in addition to its ability to bind oxygen, it also has a nitrite reductase activity whereby it regulates the production of bioactive nitric oxide. Under stress conditions, like hypoxia and anoxia, it also protects cells against reactive oxygen species thanks to its pseudoperoxidase activity. This is Myoglobin (MB) from Pan troglodytes (Chimpanzee).